The following is a 908-amino-acid chain: WD repeat-containing protein 44 (908 aa).

Positions 1 to 163 are binding activity; that stretch reads MMPLKMCTWG…SSADQLDASK (163 aa). Ser-17, Ser-40, Ser-61, Ser-71, Ser-86, and Ser-116 each carry phosphoserine. Composition is skewed to polar residues over residues 108 to 120 and 148 to 157; these read QQGSRKADSQNAA and NNLTEVSSAD. Disordered stretches follow at residues 108–158, 202–273, 309–341, 391–418, and 454–474; these read QQGS…SADQ, APAK…KDNI, TAQENGKAPDVQTVAGEVMGPQRPRSNSGRELT, VSNDATQSDDEEKLQSQQTDTDGGRLKQ, and DEVFHTDQDDPSSSDDEGMPY. 2 positions are modified to phosphothreonine: Thr-151 and Thr-211. The tract at residues 203-249 is important for interaction with ARHGAP26 AND ARHGAP10; that stretch reads PAKPPRHLTPEPDIVASTKKPVPARPPPPTNFPPPRPPPPSRPAPPP. Pro residues predominate over residues 225–248; sequence PARPPPPTNFPPPRPPPPSRPAPP. Position 254 is a phosphoserine (Ser-254). Over residues 254 to 270 the composition is skewed to basic and acidic residues; it reads SDLEFEALKTPDLDVPK. Thr-263 is modified (phosphothreonine). The interval 326–339 is important for interaction with RAB11A; the sequence is VMGPQRPRSNSGRE. 2 positions are modified to phosphoserine: Ser-334 and Ser-336. A phosphothreonine mark is found at Thr-341 and Thr-396. Phosphoserine occurs at positions 398, 465, 466, and 467. Residues 462–471 show a composition bias toward acidic residues; that stretch reads DDPSSSDDEG. Position 474 is a phosphotyrosine (Tyr-474). The stretch at 504 to 543 is one WD 1 repeat; the sequence is EHMGAVWTMKFSHCGRLLASAGQDNIVRIWALKNAFDYFN. The tract at residues 552-587 is disordered; the sequence is EGRVSPSPSQESLSSSKSDTDMGVCSGTDEDPDDKN. 2 positions are modified to phosphoserine: Ser-556 and Ser-560. Residues 556-568 are compositionally biased toward low complexity; it reads SPSPSQESLSSSK. WD repeat units follow at residues 600-638, 640-680, 685-724, 735-774, and 779-818; these read GHTADLLDLSWSKNYFLLSSSMDKTVRLWHISRRECLCC, QHID…VALW, GQTKLITAANFCQNGKYAVIGTYDGRCIFYDTEHLKYHTQ, KVGRKITGIEPLPGENKILVTSNDSRIRLYDLRDLSLSMK, and VNSSSQIKASFSHDFTYLVSGSEDKYVYIWSTYHDLSKFT.

As to quaternary structure, interacts preferentially with the GTP-bound form of RAB11 when membrane-associated. Interacts with GRAF1/ARHGAP26 or GRAF2/ARHGAP10; the interaction connects the endoplasmic reticulum (ER) with the endosomal tubule. Interacts with VAPA (via MSP domain) or VAPB (via MSP domain); the interaction connects the ER with the endosomal tubule. Does not bind to other Rab and Rho small G proteins. Post-translationally, phosphorylated by ATK1; the phosphorylation stabilizes its interaction with RAB11A and RAB11B. Expressed in heart; brain; spleen; lung; liver; muscle and kidney.

The protein localises to the cytoplasm. It localises to the cytosol. The protein resides in the perinuclear region. It is found in the endosome membrane. Its subcellular location is the golgi apparatus. The protein localises to the trans-Golgi network. In terms of biological role, downstream effector for Rab11 which regulates Rab11 intracellular membrane trafficking functions such as endocytic recycling, intracellular ciliogenesis and protein export. ATK1-mediated phosphorylation of WDR44 induces binding to Rab11 which activates endocytic recycling of transferrin receptor back to the plasma membrane. When bound to Rab11, prevents the formation of the ciliogenic Rab11-Rabin8/RAB3IP-RAB11FIP3 complex, therefore inhibiting preciliary trafficking and ciliogenesis. May participate in neo-synthesized protein export by connecting the endoplasmic reticulum (ER) with the endosomal tubule via direct interactions with the integral ER proteins VAPA or VAPB and the endosomal protein GRAFs (GRAF1/ARHGAP26 or GRAF2/ARHGAP10), which facilitates the transfer of proteins such as E-cadherin, MPP14 and CFTR into a Rab8-Rab10-Rab11-dependent export route. The polypeptide is WD repeat-containing protein 44 (Rattus norvegicus (Rat)).